Reading from the N-terminus, the 356-residue chain is Serine/arginine-rich splicing factor RS41 (356 aa).

RRM domains lie at Lys2 to Asn74 and Lys96 to Lys167. The disordered stretch occupies residues Lys73–Leu92. A compositionally biased stretch (basic and acidic residues) spans Asp168–Pro186. The tract at residues Asp168–Glu356 is disordered. A phosphoserine mark is found at Ser192, Ser194, Ser210, Ser239, Ser254, and Ser274. The segment covering Leu238–Ala253 has biased composition (basic and acidic residues). 3 repeat units span residues Lys267–Tyr278, Glu279–Tyr290, and Glu291–Tyr302. Residues Lys267–Glu307 are 4 X 12 AA tandem repeats of [KE]-[GK]-R -[GR]-E-S-R-S-P-P-P-Y. Basic and acidic residues predominate over residues Gly268 to Arg306. A 4; truncated repeat occupies Glu303–Glu307. Phosphoserine is present on residues Ser309, Ser324, Ser342, Ser347, and Ser351.

The protein belongs to the splicing factor SR family. RS subfamily. As to quaternary structure, component of the spliceosome. Interacts with RCF3 and CPL1. Interacts with DRB1/HYL1 and SE. As to expression, leaves, stem, roots and flowers.

It is found in the nucleus. It localises to the nucleus speckle. Required for constitutive and alternative pre-mRNA splicing. Involved in primary miRNA processing and pri-miRNA biogenesis. Binds both intronless and intron-containing pri-miRNAs. This is Serine/arginine-rich splicing factor RS41 (RS41) from Arabidopsis thaliana (Mouse-ear cress).